Here is a 604-residue protein sequence, read N- to C-terminus: MAELSEQVQNLSINDNNENGYVPPHLRGKPRSARNNSSNYNNNNGGYNGGRGGGSFFSNNRRGGYGNGGFFGGNNGGSRSNGRSGGRWIDGKHVPAPRNEKAEIAIFGVPEDPNFQSSGINFDNYDDIPVDASGKDVPEPITEFTSPPLDGLLLENIKLARFTKPTPVQKYSVPIVANGRDLMACAQTGSGKTGGFLFPVLSESFKTGPSPQPESQGSFYQRKAYPTAVIMAPTRELATQIFDEAKKFTYRSWVKACVVYGGSPIGNQLREIERGCDLLVATPGRLNDLLERGKISLANVKYLVLDEADRMLDMGFEPQIRHIVEDCDMTPVGERQTLMFSATFPADIQHLARDFLSDYIFLSVGRVGSTSENITQKVLYVENQDKKSALLDLLSASTDGLTLIFVETKRMADQLTDFLIMQNFRATAIHGDRTQSERERALAAFRSGAATLLVATAVAARGLDIPNVTHVINYDLPSDVDDYVHRIGRTGRAGNTGLATAFFNSENSNIVKGLHEILTEANQEVPSFLKDAMMSAPGSRSNSRRGGFGRNNNRDYRKAGGASAGGWGSSRSRDNSFRGGSGWGSDSKSSGWGNSGGSNNSSWW.

Residues 1–19 (MAELSEQVQNLSINDNNEN) show a composition bias toward polar residues. The tract at residues 1-55 (MAELSEQVQNLSINDNNENGYVPPHLRGKPRSARNNSSNYNNNNGGYNGGRGGGS) is disordered. Ala-2 carries the N-acetylalanine modification. Residues 34–45 (RNNSSNYNNNNG) are compositionally biased toward low complexity. Residues 46-55 (GYNGGRGGGS) are compositionally biased toward gly residues. Arg-51 carries the post-translational modification Omega-N-methylarginine. Arg-62 carries the dimethylated arginine; alternate modification. Omega-N-methylarginine; alternate is present on Arg-62. Residues 67–76 (NGGFFGGNNG) show a composition bias toward gly residues. Positions 67-94 (NGGFFGGNNGGSRSNGRSGGRWIDGKHV) are disordered. The short motif at 142 to 170 (TEFTSPPLDGLLLENIKLARFTKPTPVQK) is the Q motif element. A Glycyl lysine isopeptide (Lys-Gly) (interchain with G-Cter in ubiquitin) cross-link involves residue Lys-158. In terms of domain architecture, Helicase ATP-binding spans 173-362 (VPIVANGRDL…RDFLSDYIFL (190 aa)). 186 to 193 (AQTGSGKT) contacts ATP. Ser-215, Ser-218, and Ser-263 each carry phosphoserine. The short motif at 306 to 309 (DEAD) is the DEAD box element. A Helicase C-terminal domain is found at 373-533 (NITQKVLYVE…EVPSFLKDAM (161 aa)). The interval 533-604 (MMSAPGSRSN…SGGSNNSSWW (72 aa)) is disordered. Ser-535, Ser-539, and Ser-543 each carry phosphoserine. Arg-545 bears the Dimethylated arginine; alternate mark. An Omega-N-methylarginine; alternate modification is found at Arg-545. A phosphoserine mark is found at Ser-572 and Ser-576. Arg-578 carries the post-translational modification Omega-N-methylarginine. The segment covering 584 to 604 (GSDSKSSGWGNSGGSNNSSWW) has biased composition (low complexity). Residue Ser-598 is modified to Phosphoserine.

Belongs to the DEAD box helicase family. DDX3/DED1 subfamily. As to quaternary structure, interacts with the L-A virus GAG protein and the whole L-A virus particles.

It is found in the cytoplasm. The catalysed reaction is ATP + H2O = ADP + phosphate + H(+). Functionally, ATP-binding RNA helicase involved in translation initiation. Remodels RNA in response to ADP and ATP concentrations by facilitating disruption, but also formation of RNA duplexes. Has weak ATP-dependent affinity for dsRNA, but strong ATP-dependent affinity for ssRNA. Acts as a virus host factor involved in the replication of the MBV and the L-A viruses by promoting the negative-strand RNA synthesis. May be involved in recognition of the preinitiation complex and DNA binding of the RNA polymerase III and play a role in mRNA splicing. The protein is ATP-dependent RNA helicase DED1 of Saccharomyces cerevisiae (strain ATCC 204508 / S288c) (Baker's yeast).